Consider the following 471-residue polypeptide: Putative multidrug resistance protein MdtD (471 aa).

Helical transmembrane passes span 12 to 32 (LWIVAFGFFMQSLDTTIVNTA), 49 to 69 (MIIVSYVLTVAVMLPASGWLA), 77 to 97 (IFFTAIVLFTAGSLFCAQAST), 106 to 126 (VLQGIGGAMMVPVGRLTVMKI), 138 to 158 (FVTLPGQVGPLLGPALGGVLV), 165 to 185 (WIFLINIPVGIVGAIATLCLM), 195 to 215 (FDLSGFLLLAAGMATLTLALD), 220 to 240 (LGISSRWLAGLVAVGLAALLL), 263 to 283 (FSLGLGGSFAGRIGSGMLPFM), 286 to 306 (VFLQIGLGFSPFHAGLMMIPM), 342 to 362 (LLFMFSALAGWYYALPLVLFL), 393 to 413 (LLSMVMQLSMSIGVTIAGLLL), and 431 to 451 (VFLYTYLSMAAIIALPALIFS).

Belongs to the major facilitator superfamily. TCR/Tet family.

It is found in the cell inner membrane. This Klebsiella pneumoniae (strain 342) protein is Putative multidrug resistance protein MdtD.